A 428-amino-acid chain; its full sequence is Spliceosome RNA helicase Ddx39b (428 aa).

Acidic residues predominate over residues 1 to 19 (MAENDVDNELLDYEDDEVE). The tract at residues 1 to 31 (MAENDVDNELLDYEDDEVETAAGADGTEAPA) is disordered. At A2 the chain carries N-acetylalanine. N6-acetyllysine; alternate is present on K36. K36 is covalently cross-linked (Glycyl lysine isopeptide (Lys-Gly) (interchain with G-Cter in SUMO2); alternate). S38 and S41 each carry phosphoserine. The Q motif signature appears at 45 to 73 (SGFRDFLLKPELLRAIVDCGFEHPSEVQH). The Helicase ATP-binding domain occupies 76 to 249 (IPQAILGMDV…RKFMQDPMEI (174 aa)). An ATP-binding site is contributed by 89–96 (AKSGMGKT). T172 is modified (phosphothreonine). The short motif at 196-199 (DECD) is the DECD box element. The Helicase C-terminal domain occupies 261-422 (GLQQYYVKLK…ELPDEIDISS (162 aa)).

This sequence belongs to the DEAD box helicase family. DECD subfamily. In terms of assembly, homodimer, and heterodimer with DDX39A. DDX39B interacts with the THO subcomplex to form the THO-DDX39B complex which multimerizes into a 28-subunit tetrameric assembly. Component of the transcription/export (TREX) complex at least composed of ALYREF/THOC4, DDX39B, SARNP/CIP29, CHTOP and the THO subcomplex; in the complex interacts with THOC2. THOC1-THOC2-THOC3-DDX39B subcomplex is sufficient for the interaction with export factor NXF1-NXT1. TREX seems to have a dynamic structure involving ATP-dependent remodeling. Within the TREX complex bridges ALYREF/THOC4 and the THO subcomplex, and, in a ATP-dependent manner, ALYREF/THOC4 and SARNP/CIP29. Component of the spliceosome. Interacts directly with U2AF2. Interacts with RBM8A, RNPS1 and SRRM1, FYTTD1/UIF, THOC1, MX1 and POLDIP3. Interacts with LUZP4. Interacts with SARNP/CIP29 (via the C-terminal domain); the interaction is direct and facilitates RNA binding of DDX39B.

Its subcellular location is the nucleus. It localises to the nucleus speckle. It is found in the cytoplasm. The enzyme catalyses ATP + H2O = ADP + phosphate + H(+). In terms of biological role, involved in nuclear export of spliced and unspliced mRNA. Component of the TREX complex which is thought to couple mRNA transcription, processing and nuclear export, and specifically associates with spliced mRNA and not with unspliced pre-mRNA. The TREX complex is recruited to spliced mRNAs by a transcription-independent mechanism, binds to mRNA upstream of the exon-junction complex (EJC) and is recruited in a splicing- and cap-dependent manner to a region near the 5' end of the mRNA where it functions in mRNA export to the cytoplasm via the TAP/NXF1 pathway. The THOC1-THOC2-THOC3 core complex alone is sufficient to promote ATPase activity of DDX39B; in the complex THOC2 is the only component that directly interacts with DDX39B. Associates with SARNP/CIP29, which facilitates RNA binding of DDX39B and likely plays a role in mRNA export. May undergo several rounds of ATP hydrolysis during assembly of TREX to drive subsequent loading of components such as ALYREF/THOC4 and CHTOP onto mRNA. Also associates with pre-mRNA independent of ALYREF/THOC4. Involved in the nuclear export of intronless mRNA; the ATP-bound form is proposed to recruit export adapter ALYREF/THOC4 to intronless mRNA; its ATPase activity is cooperatively stimulated by RNA and ALYREF/THOC4 and ATP hydrolysis is thought to trigger the dissociation from RNA to allow the association of ALYREF/THOC4 and the NXF1-NXT1 heterodimer. Involved in transcription elongation and genome stability. Functionally, splice factor that is required for the first ATP-dependent step in spliceosome assembly and for the interaction of U2 snRNP with the branchpoint. Has both RNA-stimulated ATP binding/hydrolysis activity and ATP-dependent RNA unwinding activity. Even with the stimulation of RNA, the ATPase activity is weak. Can only hydrolyze ATP but not other NTPs. The RNA stimulation of ATPase activity does not have a strong preference for the sequence and length of the RNA. However, ssRNA stimulates the ATPase activity much more strongly than dsRNA. Can unwind 5' or 3' overhangs or blunt end RNA duplexes in vitro. The ATPase and helicase activities are not influenced by U2AF2; the effect of ALYREF/THOC4 is reported conflictingly. In Mus musculus (Mouse), this protein is Spliceosome RNA helicase Ddx39b (Ddx39b).